Reading from the N-terminus, the 293-residue chain is Probable metal transport system membrane protein CPn_0543/CP_0209/CPj0543/CpB0565 (293 aa).

The next 7 helical transmembrane spans lie at 12–32 (LLIL…GGVM), 41–61 (IVSI…LTLW), 68–88 (LSFF…LCIG), 101–121 (LIAM…SRLP), 140–160 (PSDL…VVLC), 183–203 (LWYF…IYVM), and 253–273 (FPVG…SLCV).

The protein belongs to the ABC-3 integral membrane protein family.

It is found in the cell inner membrane. Its function is as follows. Part of an ATP-driven transport system CPn_0541/CPn_0542/CPn_0543 for a metal. The chain is Probable metal transport system membrane protein CPn_0543/CP_0209/CPj0543/CpB0565 from Chlamydia pneumoniae (Chlamydophila pneumoniae).